Consider the following 168-residue polypeptide: ATP synthase subunit b (168 aa).

A helical transmembrane segment spans residues 13–33 (WTFLFQTLNLLVVMGLLYVFL).

This sequence belongs to the ATPase B chain family. As to quaternary structure, F-type ATPases have 2 components, F(1) - the catalytic core - and F(0) - the membrane proton channel. F(1) has five subunits: alpha(3), beta(3), gamma(1), delta(1), epsilon(1). F(0) has three main subunits: a(1), b(2) and c(10-14). The alpha and beta chains form an alternating ring which encloses part of the gamma chain. F(1) is attached to F(0) by a central stalk formed by the gamma and epsilon chains, while a peripheral stalk is formed by the delta and b chains.

The protein localises to the cell membrane. F(1)F(0) ATP synthase produces ATP from ADP in the presence of a proton or sodium gradient. F-type ATPases consist of two structural domains, F(1) containing the extramembraneous catalytic core and F(0) containing the membrane proton channel, linked together by a central stalk and a peripheral stalk. During catalysis, ATP synthesis in the catalytic domain of F(1) is coupled via a rotary mechanism of the central stalk subunits to proton translocation. In terms of biological role, component of the F(0) channel, it forms part of the peripheral stalk, linking F(1) to F(0). This chain is ATP synthase subunit b, found in Moorella thermoacetica (strain ATCC 39073 / JCM 9320).